The sequence spans 392 residues: Probable inactive serine/threonine-protein kinase DDB_G0280855 (392 aa).

The Protein kinase domain occupies 46–349; sequence ITKKTIYACD…IERIIQHPYF (304 aa). ATP is bound by residues 52-60 and Lys-75; that span reads YACDINGTM.

The protein belongs to the protein kinase superfamily. CMGC Ser/Thr protein kinase family. MAP kinase subfamily.

This Dictyostelium discoideum (Social amoeba) protein is Probable inactive serine/threonine-protein kinase DDB_G0280855.